A 417-amino-acid polypeptide reads, in one-letter code: Tol-Pal system protein TolB (417 aa).

The N-terminal stretch at 1 to 16 is a signal peptide; sequence MRYLWLFLIHTIGLFA.

It belongs to the TolB family. The Tol-Pal system is composed of five core proteins: the inner membrane proteins TolA, TolQ and TolR, the periplasmic protein TolB and the outer membrane protein Pal. They form a network linking the inner and outer membranes and the peptidoglycan layer.

The protein resides in the periplasm. Part of the Tol-Pal system, which plays a role in outer membrane invagination during cell division and is important for maintaining outer membrane integrity. This Helicobacter pylori (strain ATCC 700392 / 26695) (Campylobacter pylori) protein is Tol-Pal system protein TolB.